The primary structure comprises 436 residues: Adenylosuccinate synthetase (436 aa).

Residues 13–19 (GDEGKGK) and 41–43 (GHT) contribute to the GTP site. Asp-14 functions as the Proton acceptor in the catalytic mechanism. Asp-14 and Gly-41 together coordinate Mg(2+). Residues 14-17 (DEGK), 39-42 (NAGH), Thr-131, Arg-145, Gln-226, Thr-241, and Arg-309 contribute to the IMP site. The Proton donor role is filled by His-42. 305 to 311 (TVTGRKR) contacts substrate. GTP is bound by residues Arg-311, 337 to 339 (KLD), and 419 to 421 (STG).

This sequence belongs to the adenylosuccinate synthetase family. In terms of assembly, homodimer. It depends on Mg(2+) as a cofactor.

It localises to the cytoplasm. It carries out the reaction IMP + L-aspartate + GTP = N(6)-(1,2-dicarboxyethyl)-AMP + GDP + phosphate + 2 H(+). It participates in purine metabolism; AMP biosynthesis via de novo pathway; AMP from IMP: step 1/2. Its function is as follows. Plays an important role in the de novo pathway of purine nucleotide biosynthesis. Catalyzes the first committed step in the biosynthesis of AMP from IMP. The polypeptide is Adenylosuccinate synthetase (Aromatoleum aromaticum (strain DSM 19018 / LMG 30748 / EbN1) (Azoarcus sp. (strain EbN1))).